Here is a 124-residue protein sequence, read N- to C-terminus: MENENKILIIRVIRSFEYRTIKNLILKDIDLNTNVSDFKKLVADKIQTTPGFTPFKTKQYDSMKIFFVPHGQKPNNLTINIENDHFFLNNNKSLAENGVVYETEISFFVMEDYLKYKENPENKW.

The protein belongs to the UPF0538 family.

This is UPF0538 protein from Dictyostelium discoideum (Social amoeba).